The chain runs to 356 residues: Magnesium-protoporphyrin IX monomethyl ester [oxidative] cyclase (356 aa).

It belongs to the AcsF family. The cofactor is Fe cation.

The catalysed reaction is Mg-protoporphyrin IX 13-monomethyl ester + 3 NADPH + 3 O2 + 2 H(+) = 3,8-divinyl protochlorophyllide a + 3 NADP(+) + 5 H2O. The protein operates within porphyrin-containing compound metabolism; chlorophyll biosynthesis (light-independent). In terms of biological role, catalyzes the formation of the isocyclic ring in chlorophyll biosynthesis. Mediates the cyclase reaction, which results in the formation of divinylprotochlorophyllide (Pchlide) characteristic of all chlorophylls from magnesium-protoporphyrin IX 13-monomethyl ester (MgPMME). This is Magnesium-protoporphyrin IX monomethyl ester [oxidative] cyclase from Parasynechococcus marenigrum (strain WH8102).